The following is a 477-amino-acid chain: Homeobox protein Meis2 (477 aa).

The interval 71 to 191 is required for interaction with PBX1; the sequence is DALKRDKDAI…KMPIDLVIDE (121 aa). Residues 110–193 enclose the MEIS N-terminal domain; it reads GGDVCSSDSF…PIDLVIDERD (84 aa). Residues 193–203 are compositionally biased toward basic and acidic residues; it reads DGSSKSDHEEL. The segment at 193–283 is disordered; the sequence is DGSSKSDHEE…KKRQKKRGIF (91 aa). Composition is skewed to polar residues over residues 204–217 and 239–251; these read SGSS…NPSS and GHAS…SSEQ. Positions 276 to 338 form a DNA-binding region, homeobox; TALE-type; the sequence is RQKKRGIFPK…NARRRIVQPM (63 aa). An interaction with DNA region spans residues 299 to 333; sequence LTHPYPSEEQKKQLAQDTGLTILQVNNWFINARRR. The transcriptional activation domain stretch occupies residues 340–477; sequence DQSNRAGFLL…GGQVMDIHAQ (138 aa).

The protein belongs to the TALE/MEIS homeobox family. As to quaternary structure, monomer and homodimer. Heterodimer with HOXB13. Isoform Meis2A interacts with TLX1. Isoform Meis2B interacts with HOXA13 and PBX1 isoform PBX1b. Isoform Meis2D interacts with SP1, SP3 and KLF4. Isoform Meis2D interacts with PBX1 isoform PBX1a; the interaction partially relieves MEIS2 autoinhibition. Isoform Meis2B is part of a PDX1:PBX1b:MEIS2b complex; Meis2B is recruited by PBX1b and can be replaced by isoform Meis2D in a small fraction of complexes. Can form trimeric complexes including HOXB8 and PBX2 or PBX3. As to expression, displays spatially restricted expression patterns in the developing nervous system, limbs, face, and in various viscera. In adult, it is mainly expressed in the brain and female genital tract, with a different distribution of the alternative splice forms in these organs. Lower expression in lung and only basal level in heart, liver, kidney, spleen, and testis. Expressed in pancreatic islets (beta-cells only).

Its subcellular location is the nucleus. The protein resides in the cytoplasm. It localises to the perinuclear region. In terms of biological role, involved in transcriptional regulation. Binds to HOX or PBX proteins to form dimers, or to a DNA-bound dimer of PBX and HOX proteins and thought to have a role in stabilization of the homeoprotein-DNA complex. Isoform Meis2B is required for the activity of a PDX1:PBX1b:MEIS2b complex in pancreatic acinar cells involved in the transcriptional activation of the ELA1 enhancer; the complex binds to the enhancer B element and cooperates with the transcription factor 1 complex (PTF1) bound to the enhancer A element; MEIS2 is not involved in complex DNA-binding. Probably in complex with PBX1, is involved in transcriptional regulation by KLF4. Isoforms Meis2B and Meis2D can bind to a EPHA8 promoter sequence containing the DNA motif 5'-CGGTCA-3'; in cooperation with a PBX protein (such as PBX2) is proposed to be involved in the transcriptional activation of EPHA8 in the developing midbrain. May be involved in regulation of myeloid differentiation. Can bind to the DNA sequence 5'-TGACAG-3'in the activator ACT sequence of the D(1A) dopamine receptor (DRD1) promoter and activate DRD1 transcription. This chain is Homeobox protein Meis2 (Meis2), found in Mus musculus (Mouse).